Consider the following 38-residue polypeptide: uncharacterized protein (38 aa).

This is an uncharacterized protein from Treponema pallidum (strain Nichols).